The sequence spans 816 residues: Oxysterol-binding protein-related protein 1D (816 aa).

Residues 92–229 (GAGVAGIMYK…WVEAFQVAKD (138 aa)) form the PH domain. Residues 290–321 (KHIILLDTLRQLETEKIELEATVVDETKEHDS) adopt a coiled-coil conformation. The disordered stretch occupies residues 340-362 (SASDSEADNESQDGADVESDEDD). The span at 344-362 (SEADNESQDGADVESDEDD) shows a compositional bias: acidic residues. A coiled-coil region spans residues 735–764 (NGEYESANAEKLRLEQLQRQARRLQEKGWK).

It belongs to the OSBP family. In terms of tissue distribution, expressed in roots, leaves, stems and flowers.

Functionally, may be involved in the transport of sterols. This chain is Oxysterol-binding protein-related protein 1D (ORP1D), found in Arabidopsis thaliana (Mouse-ear cress).